Reading from the N-terminus, the 449-residue chain is MYDLLVRGGQLVREGGVEQADLGVVEERIVEIAPELMGDAREELDARGLHVFPGAVDIHVHFNEPGRTDWEGIRTGSRALVAGGGTVFADMPLNSTPPVLDRTTFEAKQQAAERESYADFALWGGLTPRNLDRLPELAEAGAVGFKAFMSHSGLEEFESPDDFTLYEGMLQARDLGLIVALHAESDAITRGLSTRIRREGGTGVRDYLRSRPAIAEVEAVNRALLLAEETGAKLHLVHLSTGRAVTLAAEARARGVDVSIETCPHYLCFTGEDMERLGAVLKCAPPLRDASEVDALWQAIRAGHIDTIGSDHSPSTLDLKERADFFEVWGGIAGVQSTLTVLLTEGRERGLSLPDIARLSARTPAGHFGLAGKGRLEPGADADLVLVDLDREWVHTPEDLHTRWKFSPYLGRTFRGRVVQTRLRGQTVYAEGRFPHPPQGRFLRPAPAS.

Zn(2+) is bound by residues H59, H61, K146, H182, H238, and D311. An N6-carboxylysine modification is found at K146.

The protein belongs to the metallo-dependent hydrolases superfamily. Allantoinase family. In terms of assembly, homotetramer. It depends on Zn(2+) as a cofactor. Carboxylation allows a single lysine to coordinate two zinc ions.

It carries out the reaction (S)-allantoin + H2O = allantoate + H(+). It participates in nitrogen metabolism; (S)-allantoin degradation; allantoate from (S)-allantoin: step 1/1. Catalyzes the conversion of allantoin (5-ureidohydantoin) to allantoic acid by hydrolytic cleavage of the five-member hydantoin ring. The sequence is that of Allantoinase from Deinococcus geothermalis (strain DSM 11300 / CIP 105573 / AG-3a).